Reading from the N-terminus, the 757-residue chain is Voltage-gated potassium channel KCNC3 (757 aa).

Positions 1 to 78 are important for normal N-type inactivation; the sequence is MLSSVCVSSF…CPGLPAAAMG (78 aa). Residues 1–87 are disordered; that stretch reads MLSSVCVSSF…GRHGGGGGDS (87 aa). Topologically, residues 1 to 290 are cytoplasmic; sequence MLSSVCVSSF…EDPYSSRAAR (290 aa). The span at 21 to 40 shows a compositional bias: pro residues; that stretch reads PAPPPQPPESPPPPPLPPQQ. Residues 41–52 show a composition bias toward low complexity; it reads QQPAQPGPAASP. Zn(2+)-binding residues include H157, C163, C184, and C185. A compositionally biased stretch (low complexity) spans 210 to 219; sequence AANAANAAGA. The segment at 210-232 is disordered; that stretch reads AANAANAAGAHDGGLDDEAGAGG. A helical membrane pass occupies residues 291-309; it reads YVAFASLFFILISITTFCL. N320 and N336 each carry an N-linked (GlcNAc...) asparagine glycan. Residues 351–370 traverse the membrane as a helical segment; sequence VEGVCVVWFTFEFLMRITFC. Topologically, residues 371-379 are cytoplasmic; it reads PDKVEFLKS. Residues 380–398 form a helical membrane-spanning segment; it reads SLNIIDCVAILPFYLEVGL. The helical; Voltage-sensor transmembrane segment at 412 to 434 threads the bilayer; sequence FLRVVRFVRILRIFKLTRHFVGL. The Cytoplasmic portion of the chain corresponds to 435-447; the sequence is RVLGHTLRASTNE. Residues 448 to 469 form a helical membrane-spanning segment; sequence FLLLIIFLALGVLIFATMIYYA. Residue N483 is glycosylated (N-linked (GlcNAc...) asparagine). Residues T503, L504, G505, and Y506 each coordinate K(+). The Selectivity filter signature appears at 503–508; sequence TLGYGD. A helical transmembrane segment spans residues 518-539; that stretch reads LVGALCALAGVLTIAMPVPVIV. The Cytoplasmic portion of the chain corresponds to 540 to 757; it reads NNFGMYYSLA…NANAAAWISP (218 aa). The interval 556 to 613 is disordered; sequence PKKKNKHIPRPPQPGSPNYCKPDPPPPPPPHPHHGSGGISPPPPITPPSMGVTVAGAY. An Omega-N-methylarginine modification is found at R625. Residues 682-746 are disordered; the sequence is QPAMSPEDKS…KPGPPSFLPD (65 aa). Residues S686 and S691 each carry the phosphoserine modification. The span at 728-743 shows a compositional bias: pro residues; it reads PPLPPQDWRKPGPPSF.

This sequence belongs to the potassium channel family. C (Shaw) (TC 1.A.1.2) subfamily. Kv3.3/KCNC3 sub-subfamily. As to quaternary structure, homotetramer. Heterotetramer with KCNC1. Interacts (via C-terminus) with HAX1; this interaction modulates channel gating. Identified in a complex with ACTR3, a subunit of the Arp2/3 complex; this interaction is indirect and depends on the presence of HAX1. Post-translationally, N-glycosylated.

Its subcellular location is the cell membrane. The protein resides in the presynaptic cell membrane. It is found in the perikaryon. It localises to the cell projection. The protein localises to the axon. Its subcellular location is the dendrite. The protein resides in the dendritic spine membrane. It is found in the cytoplasm. It localises to the cell cortex. The protein localises to the cytoskeleton. The enzyme catalyses K(+)(in) = K(+)(out). Its function is as follows. Voltage-gated potassium channel that plays an important role in the rapid repolarization of fast-firing brain neurons. The channel opens in response to the voltage difference across the membrane, forming a potassium-selective channel through which potassium ions pass in accordance with their electrochemical gradient. The channel displays rapid activation and inactivation kinetics. It plays a role in the regulation of the frequency, shape and duration of action potentials in Purkinje cells. Required for normal survival of cerebellar neurons, probably via its role in regulating the duration and frequency of action potentials that in turn regulate the activity of voltage-gated Ca(2+) channels and cellular Ca(2+) homeostasis. Required for normal motor function. Plays a role in the reorganization of the cortical actin cytoskeleton and the formation of actin veil structures in neuronal growth cones via its interaction with HAX1 and the Arp2/3 complex. This Homo sapiens (Human) protein is Voltage-gated potassium channel KCNC3 (KCNC3).